The primary structure comprises 395 residues: Acetate kinase 1 (395 aa).

Asparagine 8 is a binding site for Mg(2+). Lysine 15 serves as a coordination point for ATP. Arginine 89 contributes to the substrate binding site. The Proton donor/acceptor role is filled by aspartate 146. Residues histidine 206–glycine 210, aspartate 283–arginine 285, and glycine 330–asparagine 334 contribute to the ATP site. A Mg(2+)-binding site is contributed by glutamate 382.

The protein belongs to the acetokinase family. In terms of assembly, homodimer. Mg(2+) serves as cofactor. Mn(2+) is required as a cofactor.

The protein localises to the cytoplasm. The enzyme catalyses acetate + ATP = acetyl phosphate + ADP. The protein operates within metabolic intermediate biosynthesis; acetyl-CoA biosynthesis; acetyl-CoA from acetate: step 1/2. Functionally, catalyzes the formation of acetyl phosphate from acetate and ATP. Can also catalyze the reverse reaction. This chain is Acetate kinase 1, found in Lactococcus lactis subsp. lactis (strain IL1403) (Streptococcus lactis).